Here is a 97-residue protein sequence, read N- to C-terminus: MTKYEILYIIRPNIDEEAKAALVERFDGILTDNGAANLESKDWEKRKLAYEINDFREGIYHIATFEAETTSEALSEFDRLAKINLDILRHMIVKVEA.

The protein belongs to the bacterial ribosomal protein bS6 family.

Its function is as follows. Binds together with bS18 to 16S ribosomal RNA. This is Small ribosomal subunit protein bS6 (rpsF) from Lactococcus lactis subsp. lactis (strain IL1403) (Streptococcus lactis).